The chain runs to 520 residues: NADH-quinone oxidoreductase subunit N (520 aa).

A run of 14 helical transmembrane segments spans residues 13 to 33 (ALLP…ASVW), 55 to 75 (FGVI…GDGA), 87 to 107 (GFRW…LMLL), 115 to 135 (AAFG…MMVL), 141 to 161 (LMFV…LAGV), 176 to 196 (FLLG…LFGA), 219 to 239 (FMSG…AAPF), 250 to 270 (APLP…FAVF), 285 to 305 (WHMG…VFAL), 313 to 333 (MLAY…IVGD), 339 to 359 (ALIF…GVLI), 383 to 403 (WLAI…VLGG), 425 to 445 (ILAV…LAVV), and 468 to 488 (SLIA…TPIM). Positions 494-508 (ATTTTSPTSNPAAPR) are enriched in low complexity. A disordered region spans residues 494-520 (ATTTTSPTSNPAAPRGEVRLQTASVPR).

This sequence belongs to the complex I subunit 2 family. In terms of assembly, NDH-1 is composed of 14 different subunits. Subunits NuoA, H, J, K, L, M, N constitute the membrane sector of the complex.

The protein resides in the cell inner membrane. The catalysed reaction is a quinone + NADH + 5 H(+)(in) = a quinol + NAD(+) + 4 H(+)(out). Functionally, NDH-1 shuttles electrons from NADH, via FMN and iron-sulfur (Fe-S) centers, to quinones in the respiratory chain. The immediate electron acceptor for the enzyme in this species is believed to be ubiquinone. Couples the redox reaction to proton translocation (for every two electrons transferred, four hydrogen ions are translocated across the cytoplasmic membrane), and thus conserves the redox energy in a proton gradient. This Gemmatimonas aurantiaca (strain DSM 14586 / JCM 11422 / NBRC 100505 / T-27) protein is NADH-quinone oxidoreductase subunit N.